The following is an 896-amino-acid chain: Desmocollin-3 (896 aa).

The first 27 residues, Met1–Arg27, serve as a signal peptide directing secretion. Positions Ala28–Arg135 are excised as a propeptide. 5 Cadherin domains span residues Arg136–Phe243, Thr244–Phe355, Arg356–Cys471, Thr472–Gln579, and Glu580–Lys690. The Extracellular portion of the chain corresponds to Arg136 to Lys690. The N-linked (GlcNAc...) asparagine glycan is linked to Asn166. Residues Asn392, Asn546, and Asn629 are each glycosylated (N-linked (GlcNAc...) asparagine). Residues Trp691–Val711 traverse the membrane as a helical segment. Residues Cys712 to Arg896 lie on the Cytoplasmic side of the membrane.

May form homodimers. Interacts with DSG1; there is evidence to suggest that the interaction promotes cell-cell adhesion of keratinocytes. In terms of tissue distribution, expressed throughout the basal and spinous layer of the epidermis with weak expression in the granular layer (at protein level). Also expressed in the buccal mucosa, esophagus and cervix (at protein level).

The protein resides in the cell membrane. It is found in the cell junction. Its subcellular location is the desmosome. The protein localises to the cytoplasm. In terms of biological role, a component of desmosome cell-cell junctions which are required for positive regulation of cellular adhesion. Required for cell-cell adhesion in the epidermis, as a result required for the maintenance of the dermal cohesion and the dermal barrier function. Required for cell-cell adhesion of epithelial cell layers surrounding the telogen hair club, as a result plays an important role in telogen hair shaft anchorage. Essential for successful completion of embryo compaction and embryo development. In Homo sapiens (Human), this protein is Desmocollin-3 (DSC3).